Reading from the N-terminus, the 72-residue chain is MSLGVIAAAIAIGLSALGAGIGNGLIVSRTIEGVARQPELKGALQTIMFIGVALVEALPIIGVVIAFIVMNK.

2 helical membrane-spanning segments follow: residues 1-21 (MSLG…GAGI) and 49-69 (FIGV…AFIV).

The protein belongs to the ATPase C chain family. In terms of assembly, F-type ATPases have 2 components, F(1) - the catalytic core - and F(0) - the membrane proton channel. F(1) has five subunits: alpha(3), beta(3), gamma(1), delta(1), epsilon(1). F(0) has three main subunits: a(1), b(2) and c(10-14). The alpha and beta chains form an alternating ring which encloses part of the gamma chain. F(1) is attached to F(0) by a central stalk formed by the gamma and epsilon chains, while a peripheral stalk is formed by the delta and b chains.

The protein localises to the cell membrane. F(1)F(0) ATP synthase produces ATP from ADP in the presence of a proton or sodium gradient. F-type ATPases consist of two structural domains, F(1) containing the extramembraneous catalytic core and F(0) containing the membrane proton channel, linked together by a central stalk and a peripheral stalk. During catalysis, ATP synthesis in the catalytic domain of F(1) is coupled via a rotary mechanism of the central stalk subunits to proton translocation. Functionally, key component of the F(0) channel; it plays a direct role in translocation across the membrane. A homomeric c-ring of between 10-14 subunits forms the central stalk rotor element with the F(1) delta and epsilon subunits. The protein is ATP synthase subunit c of Bacillus anthracis (strain A0248).